Consider the following 754-residue polypeptide: Aspartyl/asparaginyl beta-hydroxylase (754 aa).

Positions 1–48 (MAPRKNAKGGGGNSSSSSSGSPTGCTSGGSSSPGARRETKQGGLKNGR) are disordered. Topologically, residues 1–56 (MAPRKNAKGGGGNSSSSSSGSPTGCTSGGSSSPGARRETKQGGLKNGRKGGLSGSS) are cytoplasmic. Low complexity predominate over residues 14–34 (SSSSSSGSPTGCTSGGSSSPG). S15 carries the phosphoserine modification. The chain crosses the membrane as a helical; Signal-anchor for type II membrane protein span at residues 57-77 (FFTWFMVIALLGVWTSVAVVW). Residues 78–754 (FDLVDYEEVL…PHQRRSLPAI (677 aa)) are Lumenal-facing. A glycan (N-linked (GlcNAc...) asparagine) is linked at N96. Residues D109, D111, D113, D115, and D120 each coordinate Ca(2+). Disordered stretches follow at residues 176–197 (VYSEPGENLPQEPEGPAEELQP) and 247–326 (EQEN…KKKK). Composition is skewed to basic and acidic residues over residues 261 to 284 (DAERTYQETDDVTYRDYDEQDHAV) and 309 to 318 (TNKKADEPGK). TPR repeat units follow at residues 337 to 370 (IKAELDAAEKLRKRGKIEEAVNAFEELVRKYPQS), 378 to 411 (AQCEDDLAEKRRSNEILRRAIETYQEAASLPDAP), 450 to 483 (TALKNDLGVGYLLIGDNDSAKKVYEEVLSVTPND), 485 to 517 (FAKVHYGFILKAQNKIAESIPYLKEGIESGDPG), and 521 to 553 (GRFYFHLGDAMQRVGNKEAYRWYELGHQRGHFA). N466 carries an N-linked (GlcNAc...) asparagine glycan. W621 contacts 2-oxoglutarate. A disulfide bridge links C637 with C644. Residue S664 participates in 2-oxoglutarate binding. H675 serves as a coordination point for Fe cation. 684 to 686 (RMH) is a 2-oxoglutarate binding site. N702 carries an N-linked (GlcNAc...) asparagine glycan. H721 is a Fe cation binding site. R731 contacts 2-oxoglutarate.

It belongs to the aspartyl/asparaginyl beta-hydroxylase family. In terms of assembly, monomer. Fe cation is required as a cofactor. Might be processed to the 56 kDa (AA 289-754) or 52 kDa (AA 311-754) forms in the lumen of the endoplasmic reticulum.

The protein resides in the endoplasmic reticulum membrane. It catalyses the reaction L-aspartyl-[protein] + 2-oxoglutarate + O2 = 3-hydroxy-L-aspartyl-[protein] + succinate + CO2. Specifically hydroxylates an Asp or Asn residue in certain epidermal growth factor-like (EGF) domains of a number of proteins. The chain is Aspartyl/asparaginyl beta-hydroxylase (ASPH) from Bos taurus (Bovine).